Consider the following 316-residue polypeptide: tRNA-cytidine(32) 2-sulfurtransferase (316 aa).

The PP-loop motif motif lies at 52–57 (SGGKDS). 3 residues coordinate [4Fe-4S] cluster: C127, C130, and C218.

This sequence belongs to the TtcA family. As to quaternary structure, homodimer. It depends on Mg(2+) as a cofactor. The cofactor is [4Fe-4S] cluster.

It localises to the cytoplasm. The enzyme catalyses cytidine(32) in tRNA + S-sulfanyl-L-cysteinyl-[cysteine desulfurase] + AH2 + ATP = 2-thiocytidine(32) in tRNA + L-cysteinyl-[cysteine desulfurase] + A + AMP + diphosphate + H(+). The protein operates within tRNA modification. Functionally, catalyzes the ATP-dependent 2-thiolation of cytidine in position 32 of tRNA, to form 2-thiocytidine (s(2)C32). The sulfur atoms are provided by the cysteine/cysteine desulfurase (IscS) system. This Haemophilus ducreyi (strain 35000HP / ATCC 700724) protein is tRNA-cytidine(32) 2-sulfurtransferase.